We begin with the raw amino-acid sequence, 665 residues long: Translation factor GUF1 homolog, mitochondrial (665 aa).

The transit peptide at 1–35 directs the protein to the mitochondrion; that stretch reads MAGAAVLRRSARRIYRHLAAAPAFSRSVLQQPKRL. Residues 34-53 are disordered; it reads RLLSSQSSPEHGARGAVSGS. In terms of domain architecture, tr-type G spans 61–249; that stretch reads ERVRNFSIIA…AVIERIPSPP (189 aa). GTP-binding positions include 70-77, 142-146, and 196-199; these read AHVDHGKS, DTPGH, and NKID.

It belongs to the TRAFAC class translation factor GTPase superfamily. Classic translation factor GTPase family. LepA subfamily.

It is found in the mitochondrion inner membrane. It carries out the reaction GTP + H2O = GDP + phosphate + H(+). Promotes mitochondrial protein synthesis. May act as a fidelity factor of the translation reaction, by catalyzing a one-codon backward translocation of tRNAs on improperly translocated ribosomes. Binds to mitochondrial ribosomes in a GTP-dependent manner. The sequence is that of Translation factor GUF1 homolog, mitochondrial from Sorghum bicolor (Sorghum).